Here is a 500-residue protein sequence, read N- to C-terminus: L-arabinose isomerase (500 aa).

Residues Glu306, Glu333, His350, and His450 each contribute to the Mn(2+) site.

The protein belongs to the arabinose isomerase family. As to quaternary structure, homohexamer. The cofactor is Mn(2+).

The catalysed reaction is beta-L-arabinopyranose = L-ribulose. It participates in carbohydrate degradation; L-arabinose degradation via L-ribulose; D-xylulose 5-phosphate from L-arabinose (bacterial route): step 1/3. Catalyzes the conversion of L-arabinose to L-ribulose. The sequence is that of L-arabinose isomerase from Escherichia fergusonii (strain ATCC 35469 / DSM 13698 / CCUG 18766 / IAM 14443 / JCM 21226 / LMG 7866 / NBRC 102419 / NCTC 12128 / CDC 0568-73).